We begin with the raw amino-acid sequence, 107 residues long: MSLTEKFDSVTVATKANVYFDGKCVSHGIVLADGTKKSVGVILPATLTFNTGAPEIMEGVAGSCRVRLKGESEWTVYGAGESFNVPANSSFDIEVAGEPYHYVCHFG.

It belongs to the nucleoside phosphorylase PpnP family.

The enzyme catalyses a purine D-ribonucleoside + phosphate = a purine nucleobase + alpha-D-ribose 1-phosphate. It carries out the reaction adenosine + phosphate = alpha-D-ribose 1-phosphate + adenine. It catalyses the reaction cytidine + phosphate = cytosine + alpha-D-ribose 1-phosphate. The catalysed reaction is guanosine + phosphate = alpha-D-ribose 1-phosphate + guanine. The enzyme catalyses inosine + phosphate = alpha-D-ribose 1-phosphate + hypoxanthine. It carries out the reaction thymidine + phosphate = 2-deoxy-alpha-D-ribose 1-phosphate + thymine. It catalyses the reaction uridine + phosphate = alpha-D-ribose 1-phosphate + uracil. The catalysed reaction is xanthosine + phosphate = alpha-D-ribose 1-phosphate + xanthine. Its function is as follows. Catalyzes the phosphorolysis of diverse nucleosides, yielding D-ribose 1-phosphate and the respective free bases. Can use uridine, adenosine, guanosine, cytidine, thymidine, inosine and xanthosine as substrates. Also catalyzes the reverse reactions. The chain is Pyrimidine/purine nucleoside phosphorylase from Aromatoleum aromaticum (strain DSM 19018 / LMG 30748 / EbN1) (Azoarcus sp. (strain EbN1)).